The chain runs to 249 residues: Undecaprenyl-diphosphatase (249 aa).

The next 8 membrane-spanning stretches (helical) occupy residues 11–31 (GLTEFLPISSSGHLAIFTAIF), 35–55 (PDVGYFAFLHLATFLAVLIFV), 80–100 (LVLSTIPAVFVGLFFGDFIES), 101–121 (VFSSTYLIGIFLSITGILMLL), 135–155 (IPYFDALIVGVFQAFSVLPGI), 180–200 (FLMSLPVTFGAGILELHNVAF), 202–222 (TEQIFGFVISFLTGLLGLYLV), and 226–246 (VIGGKLKIFGYYCFLASFFVL).

Belongs to the UppP family.

It localises to the cell membrane. It carries out the reaction di-trans,octa-cis-undecaprenyl diphosphate + H2O = di-trans,octa-cis-undecaprenyl phosphate + phosphate + H(+). Its function is as follows. Catalyzes the dephosphorylation of undecaprenyl diphosphate (UPP). The polypeptide is Undecaprenyl-diphosphatase (Methanococcus maripaludis (strain C7 / ATCC BAA-1331)).